Reading from the N-terminus, the 301-residue chain is Protein RESTRICTED TEV MOVEMENT 3 (301 aa).

In terms of domain architecture, MATH spans 6 to 134; that stretch reads DKKITWTIKN…NGELKIVVEI (129 aa). Residues 235-289 adopt a coiled-coil conformation; that stretch reads KLDWLEKKLYEVSEKKENEEASETGLQEMEEELKDMKQKCLEMEALVEKEKAKVS.

As to quaternary structure, self-interacts. Interacts with RTM1.

Required for the restriction of long-distance movement of the pathogenic tobacco etch virus (TEV) without causing a hypersensitive response or inducing systemic acquired resistance. This Arabidopsis thaliana (Mouse-ear cress) protein is Protein RESTRICTED TEV MOVEMENT 3 (RTM3).